The chain runs to 469 residues: ATP synthase subunit beta (469 aa).

156–163 (GGAGVGKT) lines the ATP pocket.

It belongs to the ATPase alpha/beta chains family. F-type ATPases have 2 components, CF(1) - the catalytic core - and CF(0) - the membrane proton channel. CF(1) has five subunits: alpha(3), beta(3), gamma(1), delta(1), epsilon(1). CF(0) has three main subunits: a(1), b(2) and c(9-12). The alpha and beta chains form an alternating ring which encloses part of the gamma chain. CF(1) is attached to CF(0) by a central stalk formed by the gamma and epsilon chains, while a peripheral stalk is formed by the delta and b chains.

It is found in the cell membrane. It carries out the reaction ATP + H2O + 4 H(+)(in) = ADP + phosphate + 5 H(+)(out). In terms of biological role, produces ATP from ADP in the presence of a proton gradient across the membrane. The catalytic sites are hosted primarily by the beta subunits. The chain is ATP synthase subunit beta from Bacillus cereus (strain AH820).